The sequence spans 80 residues: Exodeoxyribonuclease 7 small subunit (80 aa).

It belongs to the XseB family. In terms of assembly, heterooligomer composed of large and small subunits.

It localises to the cytoplasm. The catalysed reaction is Exonucleolytic cleavage in either 5'- to 3'- or 3'- to 5'-direction to yield nucleoside 5'-phosphates.. Its function is as follows. Bidirectionally degrades single-stranded DNA into large acid-insoluble oligonucleotides, which are then degraded further into small acid-soluble oligonucleotides. The polypeptide is Exodeoxyribonuclease 7 small subunit (Rickettsia conorii (strain ATCC VR-613 / Malish 7)).